Here is a 333-residue protein sequence, read N- to C-terminus: Protein VTE6, chloroplastic (333 aa).

The N-terminal 65 residues, 1 to 65 (MATISSTLLL…SRADGATAAA (65 aa)), are a transit peptide targeting the chloroplast. 6 consecutive transmembrane segments (helical) span residues 94-114 (LLIF…SGIA), 126-146 (AYGS…TAAT), 171-191 (VIGS…QVGG), 248-268 (TLAG…LGQI), 274-294 (AVCV…GASF), and 307-327 (VVNV…QQFI).

It belongs to the TMEM19 family.

It localises to the plastid. Its subcellular location is the chloroplast membrane. The enzyme catalyses phytyl phosphate + a ribonucleoside 5'-triphosphate = phytyl diphosphate + a ribonucleoside 5'-diphosphate. It catalyses the reaction phytyl phosphate + CTP = phytyl diphosphate + CDP. It functions in the pathway cofactor biosynthesis; tocopherol biosynthesis. In terms of biological role, phytyl-phosphate kinase catalyzing the conversion of phytyl-monophosphate to phytyl-diphosphate. Involved in the activation and reutilization of phytol from chlorophyll degradation in plant metabolism, including tocopherol (vitamin E) biosynthesis. Involved in the biosynthesis of phylloquinone (vitamin K), which is required for the photosystem I (PSI) complex stability. This chain is Protein VTE6, chloroplastic, found in Arabidopsis thaliana (Mouse-ear cress).